We begin with the raw amino-acid sequence, 191 residues long: GDP-mannose pyrophosphatase (191 aa).

GDP-alpha-D-mannose is bound by residues Y17, 38–40 (KRE), R67, and 85–87 (AGL). Residues 43–180 (DRGNGATILL…EIRDGKTVLL (138 aa)) enclose the Nudix hydrolase domain. A85, E100, and E104 together coordinate Mg(2+). The Nudix box signature appears at 86–106 (GLLDNDEPEVCIRKEAIEETG). GDP-alpha-D-mannose-binding positions include E104, E127, 150–151 (DE), and K176. E151 contributes to the Mg(2+) binding site.

Belongs to the Nudix hydrolase family. NudK subfamily. As to quaternary structure, homodimer. It depends on Mg(2+) as a cofactor.

It catalyses the reaction GDP-alpha-D-mannose + H2O = alpha-D-mannose 1-phosphate + GMP + 2 H(+). Its function is as follows. Nucleoside diphosphate sugar hydrolase that hydrolyzes GDP-mannose as its preferred substrate, yielding GMP and mannose-1-phosphate. This Escherichia coli (strain UTI89 / UPEC) protein is GDP-mannose pyrophosphatase (nudK).